Reading from the N-terminus, the 416-residue chain is Venom allergen 5 (416 aa).

Residues 1-24 (MKGILLLFLKLVVLFVYLCSSVLS) form the signal peptide. An SCP domain is found at 57–217 (DDRNTIINLH…NYGPAGNLDD (161 aa)). Arginine 82 carries the post-translational modification Arginine amide; in Cryptide Pep-4.

The protein belongs to the CRISP family. Venom allergen 5-like subfamily. Contains 9 disulfide bonds. In terms of tissue distribution, expressed by the venom gland.

It is found in the secreted. Presents weak lactate dehydrogenase (LDH) release from mast cells. Does not induce hemolytic activity, mast cell degranulation, and antimicrobial effects. In vivo, injection into mice causes moderate edema formation, but induces very weak or no change in nociceptive sensibility. It also causes an alteration in rearing (standing on hind limbs), but does not impact locomotion. In Tityus serrulatus (Brazilian scorpion), this protein is Venom allergen 5.